We begin with the raw amino-acid sequence, 1154 residues long: DNA-directed RNA polymerase subunit beta (1154 aa).

The span at Glu1108–Gly1123 shows a compositional bias: basic and acidic residues. Positions Glu1108–Glu1136 are disordered. The segment covering Ser1127–Glu1136 has biased composition (acidic residues).

The protein belongs to the RNA polymerase beta chain family. The RNAP catalytic core consists of 2 alpha, 1 beta, 1 beta' and 1 omega subunit. When a sigma factor is associated with the core the holoenzyme is formed, which can initiate transcription.

It catalyses the reaction RNA(n) + a ribonucleoside 5'-triphosphate = RNA(n+1) + diphosphate. DNA-dependent RNA polymerase catalyzes the transcription of DNA into RNA using the four ribonucleoside triphosphates as substrates. This chain is DNA-directed RNA polymerase subunit beta, found in Heliobacterium modesticaldum (strain ATCC 51547 / Ice1).